We begin with the raw amino-acid sequence, 68 residues long: DNA-directed RNA polymerase subunit omega (68 aa).

The protein belongs to the RNA polymerase subunit omega family. In terms of assembly, the RNAP catalytic core consists of 2 alpha, 1 beta, 1 beta' and 1 omega subunit. When a sigma factor is associated with the core the holoenzyme is formed, which can initiate transcription.

The catalysed reaction is RNA(n) + a ribonucleoside 5'-triphosphate = RNA(n+1) + diphosphate. Its function is as follows. Promotes RNA polymerase assembly. Latches the N- and C-terminal regions of the beta' subunit thereby facilitating its interaction with the beta and alpha subunits. The chain is DNA-directed RNA polymerase subunit omega from Sulfurovum sp. (strain NBC37-1).